The following is a 771-amino-acid chain: Endoplasmin homolog (771 aa).

The first 24 residues, 1–24 (MANSSLLRVVLVALLLLGSVTVSA), serve as a signal peptide directing secretion. Asn-63, Asp-109, and Phe-160 together coordinate ATP. Asn-63 carries an N-linked (GlcNAc...) asparagine glycan. The interval 253 to 282 (TAATPEPAAEEGSLDEGAVEEDPDKEGDTQ) is disordered. The segment covering 260 to 277 (AAEEGSLDEGAVEEDPDK) has biased composition (acidic residues). N-linked (GlcNAc...) asparagine glycans are attached at residues Asn-306 and Asn-402. The tract at residues 727-771 (ADDSLLPPDDAEYTVSDTEAEEEEEQPKVDANADEEAEAVGEDDL) is disordered. Positions 758-771 (NADEEAEAVGEDDL) are enriched in acidic residues. The Prevents secretion from ER signature appears at 768–771 (EDDL).

It belongs to the heat shock protein 90 family. In terms of assembly, homotetramer.

It localises to the endoplasmic reticulum. Molecular chaperone that functions in the processing and transport of secreted proteins. Required for the synthesis of lipophosphoglycan (LPG), a cell surface glycoconjugate. Necessary for the attachment of the galactosyl residue to the mannose within the phosphoglycan repeats of the nascent LPG chain. Also required for addition of phosphoglycan to acid phosphatase. Not required for normal growth. Has ATPase activity. Binds heparin with micromolar affinity which may facilitate infection of host cells. The sequence is that of Endoplasmin homolog from Leishmania infantum.